Consider the following 140-residue polypeptide: Ribosome-binding factor A (140 aa).

A disordered region spans residues 121–140; that stretch reads KTEQTSADDDADRLDSEDRS.

Belongs to the RbfA family. Monomer. Binds 30S ribosomal subunits, but not 50S ribosomal subunits or 70S ribosomes.

The protein resides in the cytoplasm. Its function is as follows. One of several proteins that assist in the late maturation steps of the functional core of the 30S ribosomal subunit. Associates with free 30S ribosomal subunits (but not with 30S subunits that are part of 70S ribosomes or polysomes). Required for efficient processing of 16S rRNA. May interact with the 5'-terminal helix region of 16S rRNA. The sequence is that of Ribosome-binding factor A from Psychrobacter sp. (strain PRwf-1).